The chain runs to 135 residues: Large ribosomal subunit protein uL16c (135 aa).

Belongs to the universal ribosomal protein uL16 family. Part of the 50S ribosomal subunit.

The protein localises to the plastid. Its subcellular location is the chloroplast. In Oenothera argillicola (Appalachian evening primrose), this protein is Large ribosomal subunit protein uL16c.